We begin with the raw amino-acid sequence, 478 residues long: Cytochrome P450 monooxygenase asqL (478 aa).

Cysteine 407 is a heme binding site.

It belongs to the cytochrome P450 family. Requires heme as cofactor.

It functions in the pathway secondary metabolite biosynthesis. Its pathway is alkaloid biosynthesis. The protein operates within mycotoxin biosynthesis. Its function is as follows. Cytochrome P450 monooxygenase; part of the gene cluster that mediates the biosynthesis of the aspoquinolone mycotoxins. The role of asqL within the aspoquinolone pathway has still to be determined. The first step of the pathway is catalyzed by the nonribosomal peptide synthetase asqK that condenses anthranilic acid and O-methyl-L-tyrosine to produce 4'-methoxycyclopeptin. 4'-methoxycyclopeptin is then converted to 4'-methoxydehydrocyclopeptin by the ketoglutarate-dependent dioxygenase asqJ. AsqJ also converts its first product 4'-methoxydehydrocyclopeptin to 4'-methoxycyclopenin. The following conversion of 4'-methoxycyclopenin into 4'-methoxyviridicatin is catalyzed by the cyclopenase asqI. 4'-methoxyviridicatin is the precursor of quinolone natural products, and is further converted to quinolinone B. The prenyltransferase asqH1 then catalyzes the canonical Friedel-Crafts alkylation of quinolinone B with dimethylallyl cation to yield dimethylallyl quinolone, which is subjected to FAD-dependent dehydrogenation by the FAD-linked oxidoreductase asqF to yield conjugated aryl diene. The delta(3') double bond then serves as the site of the second alkylation with DMAPP catalyzed by the prenyltransferase asqH2 to yield a carbenium ion intermediate, which can be attacked by H(2)O to yield a styrenyl quinolone containing a C3'-hydroxyprenyl chain. The FAD-dependent monooxygenase asqG performs epoxidation of the terminal C7'-C8' olefin. Finally, after dehydratation of the epoxide at C3 by asqC, the quinolone epoxide rearrangement protein asqO catalyzes an enzymatic 3-exo-tet cyclization to yield the cyclopropyl-THF ring system in aspoquinolone. The sequence is that of Cytochrome P450 monooxygenase asqL from Emericella nidulans (strain FGSC A4 / ATCC 38163 / CBS 112.46 / NRRL 194 / M139) (Aspergillus nidulans).